Here is a 434-residue protein sequence, read N- to C-terminus: Oxysterol-binding protein homolog 5 (434 aa).

An OSBP-related domain (ORD) region spans residues 18–371 (SSFNGDLSSL…KQVDYMNENT (354 aa)). An a 1,2-diacyl-sn-glycero-3-phospho-(1D-myo-inositol 4-phosphate)-binding site is contributed by 24–29 (LSSLSA). Q96 is a binding site for 20-hydroxycholesterol. Q96 is a binding site for 25-hydroxycholesterol. 7beta-hydroxycholesterol is bound by residues Q96 and R100. Position 96 (Q96) interacts with cholesterol. Residue Q96 participates in ergosterol binding. A 1,2-diacyl-sn-glycero-3-phospho-(1D-myo-inositol 4-phosphate) is bound by residues 109–112 (KPLN), 143–144 (HH), K335, E339, and R343. The residue at position 389 (S389) is a Phosphoserine.

Belongs to the OSBP family.

The protein localises to the vacuole membrane. Its subcellular location is the bud neck. Lipid transport protein (LTP) involved in non-vesicular transfer of lipids between membranes. Functions in phosphoinositide-coupled directional transport of various lipids by carrying the lipid molecule in a hydrophobic pocket and transferring it between membranes through the cytosol. Involved in maintenance of intracellular sterol distribution and homeostasis. Plays a role in ergosterol synthesis. Binds and transports sterol. May be involved in ergosterol transport from the plasma membrane (PM) to the ER. The polypeptide is Oxysterol-binding protein homolog 5 (Saccharomyces cerevisiae (strain ATCC 204508 / S288c) (Baker's yeast)).